The following is a 422-amino-acid chain: Glyceraldehyde-3-phosphate dehydrogenase GAPCP1, chloroplastic (422 aa).

A chloroplast-targeting transit peptide spans 1–69 (MAFSSLLRSA…NARSVQPIKA (69 aa)). The span at 50–63 (SGISSSLQNGNARS) shows a compositional bias: polar residues. Residues 50–84 (SGISSSLQNGNARSVQPIKATATEVPSAVRRSSSS) are disordered. Position 70 is an N-acetylthreonine (threonine 70). Residues 96-97 (RI), aspartate 118, and arginine 164 contribute to the NAD(+) site. D-glyceraldehyde 3-phosphate-binding positions include 235–237 (SCT), threonine 266, 295–296 (TG), and arginine 318. Cysteine 236 (nucleophile) is an active-site residue. Residue asparagine 400 coordinates NAD(+).

This sequence belongs to the glyceraldehyde-3-phosphate dehydrogenase family. In terms of assembly, homotetramer. Expressed in shoot and root vasculature, leaf veins and vascular tissue of flowers and siliques.

It localises to the plastid. The protein resides in the chloroplast stroma. The catalysed reaction is D-glyceraldehyde 3-phosphate + phosphate + NAD(+) = (2R)-3-phospho-glyceroyl phosphate + NADH + H(+). Functionally, involved in plastidial glycolytic pathway and plays a specific role in glycolytic energy production in non-green plastids and chloroplasts. Essential for breakdown of starch to form sucrose for export to non-photosynthetic tissues, and to generate primary metabolites for anabolic pathways such as fatty acid and amino acid synthesis. Plays an important role in plant development by providing substrates for the phosphorylated pathway of serine biosynthesis in roots. Plays a crucial role in pollen development. Functionally redundant with GAPCP2. This chain is Glyceraldehyde-3-phosphate dehydrogenase GAPCP1, chloroplastic (GAPCP1), found in Arabidopsis thaliana (Mouse-ear cress).